Here is a 91-residue protein sequence, read N- to C-terminus: Tityustoxin-19 (91 aa).

Positions 1–25 (MVATNRCCVFALLFALLLVHSLTEA) are cleaved as a signal peptide. Positions 58–91 (EYACPAIDKFCEDHCAAKKAVGKCDDFKCNCIKL) constitute a BetaSPN-type CS-alpha/beta domain. 3 cysteine pairs are disulfide-bonded: C61/C81, C68/C86, and C72/C88.

The protein belongs to the long chain scorpion toxin family. Class 2 subfamily. As to expression, expressed by the venom gland.

The protein localises to the secreted. Its function is as follows. May function as a voltage-gated potassium channel blocker and may have cytolytic activity. Is often not detected in the tested venom fractions, suggesting that the toxin is likely subject to frequent processing within the venom. Specific and reversible blocker of the potassium channel Kv1.2/KCNA2 (IC(50)=544 nM). Functionally, shows cytolytic effects on erythrocytes and induces non-selective pore formation when high concentrations (300 nM) are applied on oocytes. In terms of biological role, does not cause hemolysis, mast cell degranulation, LDH release, and does not have antimicrobial activity. Does not cause edema and pain. This is Tityustoxin-19 from Tityus serrulatus (Brazilian scorpion).